Consider the following 522-residue polypeptide: Glucose-1-phosphate adenylyltransferase large subunit 1, chloroplastic (522 aa).

The N-terminal 54 residues, 1 to 54 (MVVSADCRISLSAPSCIRSSSTGLTRHIKLGSFCNGELMGKKLNLSQLPNIRLR), are a transit peptide targeting the chloroplast. Residue Ser-428 is modified to Phosphoserine.

The protein belongs to the bacterial/plant glucose-1-phosphate adenylyltransferase family. As to quaternary structure, heterotetramer. Leaves.

It is found in the plastid. Its subcellular location is the chloroplast. The enzyme catalyses alpha-D-glucose 1-phosphate + ATP + H(+) = ADP-alpha-D-glucose + diphosphate. The protein operates within glycan biosynthesis; starch biosynthesis. Its activity is regulated as follows. Activated by 3'phosphoglycerate, inhibited by orthophosphate. Allosteric regulation. Functionally, this protein plays a role in synthesis of starch. It catalyzes the synthesis of the activated glycosyl donor, ADP-glucose from Glc-1-P and ATP. The chain is Glucose-1-phosphate adenylyltransferase large subunit 1, chloroplastic (ADG2) from Arabidopsis thaliana (Mouse-ear cress).